A 406-amino-acid polypeptide reads, in one-letter code: Lysosome-associated membrane glycoprotein 1 (406 aa).

The first 24 residues, 1 to 24, serve as a signal peptide directing secretion; that stretch reads MAAPGARRPLLLLLLAGLAHGASA. Residues 25–188 form a first lumenal domain region; that stretch reads LFEVKNNGTT…SKEETHCTQD (164 aa). At 25-370 the chain is on the lumenal side; the sequence is LFEVKNNGTT…VEECVQDGNN (346 aa). Asn31, Asn52, Asn58, Asn70, Asn78, Asn97, Asn101, Asn115, Asn159, and Asn177 each carry an N-linked (GlcNAc...) asparagine glycan. Cys35 and Cys74 are joined by a disulfide. A disulfide bond links Cys149 and Cys185. The interval 180 to 207 is disordered; the sequence is KEETHCTQDGPSPTTGPPSPSPPLVPTN. The segment at 189 to 218 is hinge; the sequence is GPSPTTGPPSPSPPLVPTNPTVSKYNVTGN. Positions 193 to 205 are enriched in pro residues; the sequence is TTGPPSPSPPLVP. Asn214, Asn219, Asn232, and Asn240 each carry an N-linked (GlcNAc...) asparagine glycan. Residues 219-370 are second lumenal domain; the sequence is NGTCLLASMA…VEECVQDGNN (152 aa). A disulfide bridge links Cys222 with Cys259. A glycan (N-linked (GlcNAc...) (high mannose) asparagine) is linked at Asn252. Asn282, Asn296, and Asn311 each carry an N-linked (GlcNAc...) asparagine glycan. Cysteines 327 and 364 form a disulfide. Residues 371–394 traverse the membrane as a helical segment; that stretch reads MLIPIAVGGALAGLVLIVLIAYLI. The Cytoplasmic segment spans residues 395–406; sequence GRKRSHAGYQTI.

This sequence belongs to the LAMP family. In terms of assembly, interacts with ABCB9; this interaction strongly stabilizes ABCB9 and protects ABCB9 against lysosomal degradation. Interacts with FURIN. Interacts with TMEM175; inhibiting the proton channel activity of TMEM175. O- and N-glycosylated; some of the N-glycans attached to LAMP-1 are polylactosaminoglycans.

Its subcellular location is the lysosome membrane. It localises to the endosome membrane. The protein resides in the late endosome membrane. It is found in the cell membrane. The protein localises to the cytolytic granule membrane. Functionally, lysosomal membrane glycoprotein which plays an important role in lysosome biogenesis, lysosomal pH regulation, autophagy and cholesterol homeostasis. Acts as an important regulator of lysosomal lumen pH regulation by acting as a direct inhibitor of the proton channel TMEM175, facilitating lysosomal acidification for optimal hydrolase activity. Also plays an important role in NK-cells cytotoxicity. Mechanistically, participates in cytotoxic granule movement to the cell surface and perforin trafficking to the lytic granule. In addition, protects NK-cells from degranulation-associated damage induced by their own cytotoxic granule content. Presents carbohydrate ligands to selectins. Also implicated in tumor cell metastasis. This Mus musculus (Mouse) protein is Lysosome-associated membrane glycoprotein 1 (Lamp1).